The primary structure comprises 711 residues: Quinolinate synthase, chloroplastic (711 aa).

The transit peptide at 1–41 directs the protein to the chloroplast; it reads MDVSSLAAAAPSLVAPPLHHKPHLAFPPHHPSPARGSIGVR. Positions 17–63 are disordered; that stretch reads PLHHKPHLAFPPHHPSPARGSIGVRCAHSPSPHPLRPSAATADEEVS. Cysteine 114 acts as the Cysteine persulfide intermediate in catalysis. Positions 263 and 289 each coordinate iminosuccinate. Cysteine 343 is a binding site for [4Fe-4S] cluster. Iminosuccinate contacts are provided by residues 372 to 374 and serine 394; that span reads YIN. Residue cysteine 467 coordinates [4Fe-4S] cluster. Residues 493-495 and threonine 518 contribute to the iminosuccinate site; that span reads HFE. [4Fe-4S] cluster is bound at residue cysteine 631.

The protein belongs to the quinolinate synthase family. Type 1 subfamily. As to quaternary structure, homodimer. The cofactor is [4Fe-4S] cluster.

It is found in the plastid. It localises to the chloroplast. It catalyses the reaction iminosuccinate + dihydroxyacetone phosphate = quinolinate + phosphate + 2 H2O + H(+). The protein operates within cofactor biosynthesis; NAD(+) biosynthesis; quinolinate from iminoaspartate: step 1/1. Its function is as follows. Catalyzes the condensation of iminoaspartate with dihydroxyacetone phosphate to form quinolinate. The chain is Quinolinate synthase, chloroplastic from Oryza sativa subsp. japonica (Rice).